A 409-amino-acid chain; its full sequence is Shaggy-related protein kinase gamma (409 aa).

N-acetylalanine is present on A2. One can recognise a Protein kinase domain in the interval 73-357; sequence YMAERVVGHG…ALDSLVHPFF (285 aa). ATP-binding positions include 79 to 87 and K102; that span reads VGHGSFGVV. The Proton acceptor role is filled by D198. Residue Y233 is modified to Phosphotyrosine.

This sequence belongs to the protein kinase superfamily. CMGC Ser/Thr protein kinase family. GSK-3 subfamily. In terms of assembly, binds to KIB1. Component of a complex made of POLAR, BASL, ASK7/BIN2 and ASK3/SK12. Binds to POLAR and BASL. In terms of processing, autophosphorylated mainly on threonine and serine residues. Roots, shoots and leaves.

The protein localises to the cytoplasm. It localises to the cell cortex. It catalyses the reaction L-seryl-[protein] + ATP = O-phospho-L-seryl-[protein] + ADP + H(+). The enzyme catalyses L-threonyl-[protein] + ATP = O-phospho-L-threonyl-[protein] + ADP + H(+). Functionally, may mediate extracellular signals to regulate transcription in differentiating cells. Probably involved first at the cortical polarity site, to restrict MAPK signaling and promote asymmetric cell division (ACD), and second in the nucleus of stomatal lineage ground cells (SLGCs) or meristemoids, to limit cell division and to promote differentiation into pavement or stomatal guard cells, respectively. Phosphorylate YDA and SPCH in vitro. This Arabidopsis thaliana (Mouse-ear cress) protein is Shaggy-related protein kinase gamma.